Reading from the N-terminus, the 212-residue chain is Large ribosomal subunit protein mL48 (212 aa).

A mitochondrion-targeting transit peptide spans 1–28 (MNGALGKVLCLKNDTIFKQAFSLLRFRT). The residue at position 199 (lysine 199) is an N6-succinyllysine.

Belongs to the mitochondrion-specific ribosomal protein mL48 family. Component of the mitochondrial ribosome large subunit (39S) which comprises a 16S rRNA and about 50 distinct proteins. Interacts with OXA1L.

The protein localises to the mitochondrion. This is Large ribosomal subunit protein mL48 (MRPL48) from Bos taurus (Bovine).